A 239-amino-acid polypeptide reads, in one-letter code: Ribonuclease PH (239 aa).

Phosphate contacts are provided by residues Arg-86 and 124–126; that span reads GTR.

It belongs to the RNase PH family. As to quaternary structure, homohexameric ring arranged as a trimer of dimers.

It catalyses the reaction tRNA(n+1) + phosphate = tRNA(n) + a ribonucleoside 5'-diphosphate. In terms of biological role, phosphorolytic 3'-5' exoribonuclease that plays an important role in tRNA 3'-end maturation. Removes nucleotide residues following the 3'-CCA terminus of tRNAs; can also add nucleotides to the ends of RNA molecules by using nucleoside diphosphates as substrates, but this may not be physiologically important. Probably plays a role in initiation of 16S rRNA degradation (leading to ribosome degradation) during starvation. The polypeptide is Ribonuclease PH (Rickettsia bellii (strain RML369-C)).